A 501-amino-acid polypeptide reads, in one-letter code: Dipeptide and tripeptide permease A (501 aa).

Residues 1–21 (MSTANNKPAESVSLNAFKQPR) lie on the Cytoplasmic side of the membrane. The chain crosses the membrane as a helical span at residues 22–44 (AFYLIFSIELWERFGYYGLQGIM). Over 45–59 (AVYLVKQLGMSEADS) the chain is Periplasmic. Residues 60–80 (ITLFSSFSALVYGLVAIGGWL) form a helical membrane-spanning segment. At 81–89 (GDKVLGTKR) the chain is on the cytoplasmic side. A helical transmembrane segment spans residues 90–110 (VIMLGAIVLAIGYALVAWSGH). Position 111 (D111) is a topological domain, periplasmic. The chain crosses the membrane as a helical span at residues 112-132 (AAIVYMGMATIAVGNGLFKAN). Over 133–153 (PSSLLSTCYDKNDPRLDGAFT) the chain is Cytoplasmic. A helical transmembrane segment spans residues 154-174 (MYYMSINIGSFFSMLATPWLA). Over 175–178 (ARFG) the chain is Periplasmic. A helical transmembrane segment spans residues 179 to 199 (WSVAFALSVVGMVITIINFAF). The Cytoplasmic portion of the chain corresponds to 200–218 (CQKWVKQYGSKPDFAPVHM). The helical transmembrane segment at 219 to 239 (GKLLATIAGVVVLVAIATWLL) threads the bilayer. Over 240 to 246 (HNQGIAR) the chain is Periplasmic. A helical transmembrane segment spans residues 247–267 (MVLGVVALGIVVIFAKETIGL). Residues 268 to 274 (KGAARRK) lie on the Cytoplasmic side of the membrane. Residues 275–295 (MIVAFLLMVEAIVFFVLYSQM) form a helical membrane-spanning segment. The Periplasmic portion of the chain corresponds to 296–320 (PTSLNFFAIRNVEHSILGIAFEPEQ). The chain crosses the membrane as a helical span at residues 321–341 (YQALNPFWIMIGSPILAAIYN). Residues 342 to 352 (KMGDRLPMPHK) are Cytoplasmic-facing. Residues 353–373 (FAIGMVLCSGAFLVLPLGAKF) form a helical membrane-spanning segment. Residues 374 to 383 (ASDAGIVSVN) lie on the Periplasmic side of the membrane. The chain crosses the membrane as a helical span at residues 384-404 (WLILSYALQSIGELMISGLGL). Residues 405-414 (AMVAQLVPQR) are Cytoplasmic-facing. A helical transmembrane segment spans residues 415–435 (LMGFIMGSWFLTTAGAAIIAG). Over 436–459 (KIANLMAVPENVTDPLVSLEVYGH) the chain is Periplasmic. Residues 460 to 480 (VFLQIGIVTAVIAALMLLTAP) traverse the membrane as a helical segment. Over 481-501 (KLNRMTQDDSADLKARETAAA) the chain is Cytoplasmic.

Belongs to the major facilitator superfamily. Proton-dependent oligopeptide transporter (POT/PTR) (TC 2.A.17) family. DtpA subfamily.

The protein resides in the cell inner membrane. Functionally, proton-dependent permease that transports di- and tripeptides. In Klebsiella pneumoniae (strain 342), this protein is Dipeptide and tripeptide permease A.